A 380-amino-acid polypeptide reads, in one-letter code: Cytochrome b (380 aa).

Transmembrane regions (helical) follow at residues 34-54 (FGSL…LLAA), 78-99 (WLIR…YLHI), 114-134 (WNTG…GYVL), and 179-199 (FFTL…IHLT). His84 and His98 together coordinate heme b. 2 residues coordinate heme b: His183 and His197. His202 contributes to the a ubiquinone binding site. The next 4 membrane-spanning stretches (helical) occupy residues 227–247 (TKDI…ALFS), 289–309 (LGGV…PLLH), 321–341 (LSQL…WIGS), and 348–368 (FIII…ILFP).

This sequence belongs to the cytochrome b family. In terms of assembly, the cytochrome bc1 complex contains 11 subunits: 3 respiratory subunits (MT-CYB, CYC1 and UQCRFS1), 2 core proteins (UQCRC1 and UQCRC2) and 6 low-molecular weight proteins (UQCRH/QCR6, UQCRB/QCR7, UQCRQ/QCR8, UQCR10/QCR9, UQCR11/QCR10 and a cleavage product of UQCRFS1). This cytochrome bc1 complex then forms a dimer. The cofactor is heme b.

Its subcellular location is the mitochondrion inner membrane. Functionally, component of the ubiquinol-cytochrome c reductase complex (complex III or cytochrome b-c1 complex) that is part of the mitochondrial respiratory chain. The b-c1 complex mediates electron transfer from ubiquinol to cytochrome c. Contributes to the generation of a proton gradient across the mitochondrial membrane that is then used for ATP synthesis. In Eudyptes chrysolophus (Macaroni penguin), this protein is Cytochrome b (MT-CYB).